The primary structure comprises 86 residues: MAQKKGGGSTRNGRDSESKRLGVKVFGGEYINAGSIIIRQRGTRVHPGANVGIGKDHTLFALIDGQVEFGVKGALKKAQVSVLPRS.

Over residues 1 to 10 (MAQKKGGGST) the composition is skewed to gly residues. The disordered stretch occupies residues 1–20 (MAQKKGGGSTRNGRDSESKR).

The protein belongs to the bacterial ribosomal protein bL27 family.

The protein is Large ribosomal subunit protein bL27 of Polynucleobacter necessarius subsp. necessarius (strain STIR1).